Consider the following 438-residue polypeptide: Proline--tRNA ligase (438 aa).

Belongs to the class-II aminoacyl-tRNA synthetase family. ProS type 2 subfamily. Homodimer.

The protein resides in the cytoplasm. It catalyses the reaction tRNA(Pro) + L-proline + ATP = L-prolyl-tRNA(Pro) + AMP + diphosphate. Its function is as follows. Catalyzes the attachment of proline to tRNA(Pro) in a two-step reaction: proline is first activated by ATP to form Pro-AMP and then transferred to the acceptor end of tRNA(Pro). The polypeptide is Proline--tRNA ligase (Rickettsia canadensis (strain McKiel)).